The sequence spans 349 residues: Lachesin (349 aa).

The N-terminal stretch at 1 to 18 is a signal peptide; it reads MDLRLYTIFVGFFSVVYA. The Ig-like V-type domain maps to 22–127; sequence PTISYISQEQ…NKITAEVDLQ (106 aa). A disulfide bridge connects residues Cys-43 and Cys-110. Ig-like C2-type domains follow at residues 132 to 218 and 222 to 315; these read PVIS…IAVE and PPVI…VELF. A glycan (N-linked (GlcNAc...) asparagine) is linked at Asn-137. Cystine bridges form between Cys-154-Cys-201 and Cys-244-Cys-299. The GPI-anchor amidated glycine moiety is linked to residue Gly-332. A propeptide spans 333 to 349 (removed in mature form); it reads DAAEISTSMALILISTI.

In terms of processing, the N-terminus is blocked. In terms of tissue distribution, expressed by all neurogenic cells early, but only those cells that become neuroblasts continue to express it. Expressed by neuroblasts, ganglion mother cells and neurons early in their lives, but expression becomes restricted to a subset of neurons as development progresses. Expressed by sensory neurons as they delaminate from the body wall ectoderm. It is also present on growing axons of the CNS and PNS and becomes restricted to a subset of axons later in development.

The protein localises to the cell membrane. In terms of biological role, may play a role in early neuronal differentiation and axon outgrowth. This Schistocerca americana (American grasshopper) protein is Lachesin (LAC).